The chain runs to 134 residues: Large ribosomal subunit protein eL27 (134 aa).

Positions 5–40 constitute a KOW domain; it reads LKSGKVVVVLSGRFAGKKAVIVRNFDDGTSSRPYGH.

The protein belongs to the eukaryotic ribosomal protein eL27 family.

The protein is Large ribosomal subunit protein eL27 (RPL27) of Pyrobotrys stellatus (Green alga).